The following is a 156-amino-acid chain: Small ribosomal subunit protein uS7 (156 aa).

This sequence belongs to the universal ribosomal protein uS7 family. As to quaternary structure, part of the 30S ribosomal subunit. Contacts proteins S9 and S11.

Its function is as follows. One of the primary rRNA binding proteins, it binds directly to 16S rRNA where it nucleates assembly of the head domain of the 30S subunit. Is located at the subunit interface close to the decoding center, probably blocks exit of the E-site tRNA. The chain is Small ribosomal subunit protein uS7 from Bartonella quintana (strain Toulouse) (Rochalimaea quintana).